A 1593-amino-acid chain; its full sequence is Autotransporter CRAC (1593 aa).

A signal peptide spans M1–A54. The segment covering G65–N85 has biased composition (polar residues). 2 disordered regions span residues G65–S100 and K1267–P1286. Residues S86–S97 are compositionally biased toward low complexity. Residues D1269 to T1280 show a composition bias toward polar residues. The Autotransporter domain maps to N1325–F1593.

In terms of processing, glycosylated by heptosyltransferas BAHTCr. Glycosylation is required for adhesion to mammalian cells and colonization of the mouse host gastrointestinal tract.

It localises to the cell outer membrane. Autotransporter required for the colonization of the mouse host gastrointestinal tract, possibly by mediating bacteria adhesion to host cells. The polypeptide is Autotransporter CRAC (Citrobacter rodentium (strain ICC168) (Citrobacter freundii biotype 4280)).